Consider the following 91-residue polypeptide: Probable Fe(2+)-trafficking protein (91 aa).

The protein belongs to the Fe(2+)-trafficking protein family.

Its function is as follows. Could be a mediator in iron transactions between iron acquisition and iron-requiring processes, such as synthesis and/or repair of Fe-S clusters in biosynthetic enzymes. The protein is Probable Fe(2+)-trafficking protein of Ralstonia pickettii (strain 12J).